A 151-amino-acid chain; its full sequence is FAD synthase (151 aa).

ATP is bound by residues 12–13 (TF), 17–20 (HPGH), Asp97, and Tyr125.

Belongs to the archaeal FAD synthase family. Homodimer. Requires a divalent metal cation as cofactor.

It catalyses the reaction FMN + ATP + H(+) = FAD + diphosphate. Its pathway is cofactor biosynthesis; FAD biosynthesis; FAD from FMN: step 1/1. Its function is as follows. Catalyzes the transfer of the AMP portion of ATP to flavin mononucleotide (FMN) to produce flavin adenine dinucleotide (FAD) coenzyme. The polypeptide is FAD synthase (Methanocaldococcus sp. (strain FS406-22)).